The primary structure comprises 228 residues: UPF0758 protein SH1266 (228 aa).

One can recognise an MPN domain in the interval 102–224 (KITSPSDVSN…YASLVEEGYF (123 aa)). The Zn(2+) site is built by histidine 173, histidine 175, and aspartate 186. Positions 173 to 186 (HNHPSGDVTPSKED) match the JAMM motif motif.

Belongs to the UPF0758 family.

This is UPF0758 protein SH1266 from Staphylococcus haemolyticus (strain JCSC1435).